A 707-amino-acid chain; its full sequence is uncharacterized protein (707 aa).

Disordered stretches follow at residues alanine 15–tyrosine 122 and glutamate 667–glutamate 707. 2 stretches are compositionally biased toward basic and acidic residues: residues lysine 18–isoleucine 32 and glutamate 40–lysine 52. Serine 112 carries the post-translational modification Phosphoserine. The stretch at glutamate 659 to glutamate 700 forms a coiled coil. The segment covering isoleucine 692 to glutamate 707 has biased composition (acidic residues).

This sequence belongs to the NOC2 family.

Its subcellular location is the nucleus. It localises to the nucleolus. This is an uncharacterized protein from Schizosaccharomyces pombe (strain 972 / ATCC 24843) (Fission yeast).